A 234-amino-acid polypeptide reads, in one-letter code: tRNA (guanine-N(1)-)-methyltransferase (234 aa).

S-adenosyl-L-methionine is bound by residues Gly-115 and 135-140 (VGDYIL).

The protein belongs to the RNA methyltransferase TrmD family. Homodimer.

It localises to the cytoplasm. The catalysed reaction is guanosine(37) in tRNA + S-adenosyl-L-methionine = N(1)-methylguanosine(37) in tRNA + S-adenosyl-L-homocysteine + H(+). In terms of biological role, specifically methylates guanosine-37 in various tRNAs. This Rickettsia peacockii (strain Rustic) protein is tRNA (guanine-N(1)-)-methyltransferase.